The chain runs to 456 residues: Arginine biosynthesis bifunctional protein ArgJ, mitochondrial (456 aa).

Substrate-binding residues include T184, K213, T224, E311, N451, and T456. T224 (nucleophile) is an active-site residue.

Belongs to the ArgJ family. Heterodimer of an alpha and a beta chain. Post-translationally, the alpha and beta chains are autoproteolytically processed from a single precursor protein within the mitochondrion.

The protein resides in the mitochondrion matrix. It carries out the reaction N(2)-acetyl-L-ornithine + L-glutamate = N-acetyl-L-glutamate + L-ornithine. The enzyme catalyses L-glutamate + acetyl-CoA = N-acetyl-L-glutamate + CoA + H(+). The protein operates within amino-acid biosynthesis; L-arginine biosynthesis; L-ornithine and N-acetyl-L-glutamate from L-glutamate and N(2)-acetyl-L-ornithine (cyclic): step 1/1. It functions in the pathway amino-acid biosynthesis; L-arginine biosynthesis; N(2)-acetyl-L-ornithine from L-glutamate: step 1/4. Its function is as follows. Catalyzes two activities which are involved in the cyclic version of arginine biosynthesis: the synthesis of acetylglutamate from glutamate and acetyl-CoA, and of ornithine by transacetylation between acetylornithine and glutamate. The polypeptide is Arginine biosynthesis bifunctional protein ArgJ, mitochondrial (Aspergillus niger (strain ATCC MYA-4892 / CBS 513.88 / FGSC A1513)).